An 879-amino-acid chain; its full sequence is Alanine--tRNA ligase (879 aa).

Positions 566, 570, 668, and 672 each coordinate Zn(2+).

The protein belongs to the class-II aminoacyl-tRNA synthetase family. Requires Zn(2+) as cofactor.

It is found in the cytoplasm. The catalysed reaction is tRNA(Ala) + L-alanine + ATP = L-alanyl-tRNA(Ala) + AMP + diphosphate. Catalyzes the attachment of alanine to tRNA(Ala) in a two-step reaction: alanine is first activated by ATP to form Ala-AMP and then transferred to the acceptor end of tRNA(Ala). Also edits incorrectly charged Ser-tRNA(Ala) and Gly-tRNA(Ala) via its editing domain. In Clostridium perfringens (strain ATCC 13124 / DSM 756 / JCM 1290 / NCIMB 6125 / NCTC 8237 / Type A), this protein is Alanine--tRNA ligase.